A 90-amino-acid chain; its full sequence is Small ribosomal subunit protein uS17 (90 aa).

It belongs to the universal ribosomal protein uS17 family. As to quaternary structure, part of the 30S ribosomal subunit.

One of the primary rRNA binding proteins, it binds specifically to the 5'-end of 16S ribosomal RNA. The polypeptide is Small ribosomal subunit protein uS17 (Cutibacterium acnes (strain DSM 16379 / KPA171202) (Propionibacterium acnes)).